A 261-amino-acid chain; its full sequence is Thiazole synthase (261 aa).

Lys-102 serves as the catalytic Schiff-base intermediate with DXP. 1-deoxy-D-xylulose 5-phosphate is bound by residues Gly-163, Ala-189–Gly-190, and Asn-211–Thr-212.

This sequence belongs to the ThiG family. Homotetramer. Forms heterodimers with either ThiH or ThiS.

It localises to the cytoplasm. It carries out the reaction [ThiS sulfur-carrier protein]-C-terminal-Gly-aminoethanethioate + 2-iminoacetate + 1-deoxy-D-xylulose 5-phosphate = [ThiS sulfur-carrier protein]-C-terminal Gly-Gly + 2-[(2R,5Z)-2-carboxy-4-methylthiazol-5(2H)-ylidene]ethyl phosphate + 2 H2O + H(+). It functions in the pathway cofactor biosynthesis; thiamine diphosphate biosynthesis. Its function is as follows. Catalyzes the rearrangement of 1-deoxy-D-xylulose 5-phosphate (DXP) to produce the thiazole phosphate moiety of thiamine. Sulfur is provided by the thiocarboxylate moiety of the carrier protein ThiS. In vitro, sulfur can be provided by H(2)S. The sequence is that of Thiazole synthase from Acinetobacter baylyi (strain ATCC 33305 / BD413 / ADP1).